The following is a 419-amino-acid chain: S-adenosylmethionine synthase (419 aa).

Position 15 (His-15) interacts with ATP. Asp-17 serves as a coordination point for Mg(2+). Glu-43 contributes to the K(+) binding site. L-methionine is bound by residues Glu-56 and Gln-100. A flexible loop region spans residues 100–110 (QSPDIAQGVDE). Residues 171 to 173 (DGK), 248 to 249 (KF), Asp-257, 263 to 264 (RK), Ala-280, and Lys-284 each bind ATP. Asp-257 serves as a coordination point for L-methionine. Residue Lys-288 participates in L-methionine binding.

This sequence belongs to the AdoMet synthase family. Homotetramer; dimer of dimers. The cofactor is Mg(2+). Requires K(+) as cofactor.

It is found in the cytoplasm. The enzyme catalyses L-methionine + ATP + H2O = S-adenosyl-L-methionine + phosphate + diphosphate. It participates in amino-acid biosynthesis; S-adenosyl-L-methionine biosynthesis; S-adenosyl-L-methionine from L-methionine: step 1/1. Functionally, catalyzes the formation of S-adenosylmethionine (AdoMet) from methionine and ATP. The overall synthetic reaction is composed of two sequential steps, AdoMet formation and the subsequent tripolyphosphate hydrolysis which occurs prior to release of AdoMet from the enzyme. The protein is S-adenosylmethionine synthase of Parasynechococcus marenigrum (strain WH8102).